The chain runs to 129 residues: Glycine cleavage system H protein (129 aa).

Residues 24 to 106 (EAVVGITEHA…YGAGWLFRIK (83 aa)) form the Lipoyl-binding domain. An N6-lipoyllysine modification is found at Lys-65.

It belongs to the GcvH family. As to quaternary structure, the glycine cleavage system is composed of four proteins: P, T, L and H. The cofactor is (R)-lipoate.

The glycine cleavage system catalyzes the degradation of glycine. The H protein shuttles the methylamine group of glycine from the P protein to the T protein. This is Glycine cleavage system H protein from Aeromonas hydrophila subsp. hydrophila (strain ATCC 7966 / DSM 30187 / BCRC 13018 / CCUG 14551 / JCM 1027 / KCTC 2358 / NCIMB 9240 / NCTC 8049).